We begin with the raw amino-acid sequence, 208 residues long: Protein-L-isoaspartate O-methyltransferase (208 aa).

Residue S59 is part of the active site.

Belongs to the methyltransferase superfamily. L-isoaspartyl/D-aspartyl protein methyltransferase family.

It is found in the cytoplasm. The enzyme catalyses [protein]-L-isoaspartate + S-adenosyl-L-methionine = [protein]-L-isoaspartate alpha-methyl ester + S-adenosyl-L-homocysteine. Catalyzes the methyl esterification of L-isoaspartyl residues in peptides and proteins that result from spontaneous decomposition of normal L-aspartyl and L-asparaginyl residues. It plays a role in the repair and/or degradation of damaged proteins. This chain is Protein-L-isoaspartate O-methyltransferase, found in Vibrio cholerae serotype O1 (strain ATCC 39541 / Classical Ogawa 395 / O395).